The following is a 171-amino-acid chain: S-ribosylhomocysteine lyase (171 aa).

Fe cation contacts are provided by His54, His58, and Cys128.

This sequence belongs to the LuxS family. In terms of assembly, homodimer. The cofactor is Fe cation.

It catalyses the reaction S-(5-deoxy-D-ribos-5-yl)-L-homocysteine = (S)-4,5-dihydroxypentane-2,3-dione + L-homocysteine. In terms of biological role, involved in the synthesis of autoinducer 2 (AI-2) which is secreted by bacteria and is used to communicate both the cell density and the metabolic potential of the environment. The regulation of gene expression in response to changes in cell density is called quorum sensing. Catalyzes the transformation of S-ribosylhomocysteine (RHC) to homocysteine (HC) and 4,5-dihydroxy-2,3-pentadione (DPD). In Citrobacter koseri (strain ATCC BAA-895 / CDC 4225-83 / SGSC4696), this protein is S-ribosylhomocysteine lyase.